A 961-amino-acid polypeptide reads, in one-letter code: RNA polymerase II subunit A C-terminal domain phosphatase (961 aa).

Methionine 1 is modified (N-acetylmethionine). Positions 178 to 344 constitute an FCP1 homology domain; that stretch reads HRNRKLVLMV…SRESQTRKKV (167 aa). The disordered stretch occupies residues 328-589; that stretch reads DMNAPPGSRE…EEEDTDEDDH (262 aa). Positions 394–406 are enriched in basic and acidic residues; that stretch reads DSPRPGKPDERDI. At serine 395 the chain carries Phosphoserine. A compositionally biased stretch (acidic residues) spans 450-462; that stretch reads LDFDLSSDSESSS. The span at 463-475 shows a compositional bias: low complexity; sequence ESEGTKSSSSASD. A compositionally biased stretch (acidic residues) spans 575-588; sequence SMEEEEEEDTDEDD. In terms of domain architecture, BRCT spans 629 to 728; sequence LKSKVLADVA…DKVEEQLFPL (100 aa). Serine 674 and serine 740 each carry phosphoserine. Disordered stretches follow at residues 730-752 and 780-949; these read DDHTKAQRENSPAAFPDREGVPP and KLIR…ADEM. Lysine 780 carries the N6-acetyllysine modification. Positions 793–803 are enriched in polar residues; the sequence is SSSLPIRQEPS. Serine 839 carries the post-translational modification Phosphoserine. Residues 850–859 show a composition bias toward basic and acidic residues; that stretch reads CKEDLESMDK. 2 stretches are compositionally biased toward acidic residues: residues 860-873 and 937-947; these read EVDDILGEGSDDSD and NEDEGSSSEAD. Residues serine 869 and serine 872 each carry the phosphoserine modification.

In terms of assembly, homodimer. Interacts with GTF2F1. Interacts with WDR77, SNRPB and SNRNP70. Post-translationally, phosphorylated. In the presence of TFIIF, the phosphorylated form has an increased CTD phosphatase activity. The phosphorylation is required for the physical interaction with GTF2F1. In terms of tissue distribution, ubiquitously expressed.

The protein localises to the nucleus. It is found in the cytoplasm. Its subcellular location is the cytoskeleton. The protein resides in the microtubule organizing center. It localises to the centrosome. The protein localises to the spindle pole. It is found in the midbody. It catalyses the reaction O-phospho-L-seryl-[protein] + H2O = L-seryl-[protein] + phosphate. The catalysed reaction is O-phospho-L-threonyl-[protein] + H2O = L-threonyl-[protein] + phosphate. Functionally, processively dephosphorylates 'Ser-2' and 'Ser-5' of the heptad repeats YSPTSPS in the C-terminal domain of the largest RNA polymerase II subunit. This promotes the activity of RNA polymerase II. Plays a role in the exit from mitosis by dephosphorylating crucial mitotic substrates (USP44, CDC20 and WEE1) that are required for M-phase-promoting factor (MPF)/CDK1 inactivation. The sequence is that of RNA polymerase II subunit A C-terminal domain phosphatase (CTDP1) from Homo sapiens (Human).